The chain runs to 276 residues: Large ribosomal subunit protein uL2 (276 aa).

2 disordered regions span residues 35–55 (APLH…RHQG) and 222–276 (GSVM…RRKK). The segment covering 258 to 276 (KTRKKNKHSDKYIVRRRKK) has biased composition (basic residues).

Belongs to the universal ribosomal protein uL2 family. In terms of assembly, part of the 50S ribosomal subunit. Forms a bridge to the 30S subunit in the 70S ribosome.

In terms of biological role, one of the primary rRNA binding proteins. Required for association of the 30S and 50S subunits to form the 70S ribosome, for tRNA binding and peptide bond formation. It has been suggested to have peptidyltransferase activity; this is somewhat controversial. Makes several contacts with the 16S rRNA in the 70S ribosome. The chain is Large ribosomal subunit protein uL2 from Shouchella clausii (strain KSM-K16) (Alkalihalobacillus clausii).